Reading from the N-terminus, the 251-residue chain is Osmotin-like protein (251 aa).

Residues 1-21 (MSHLTTFLVFFLLAFVTYTYA) form the signal peptide. 8 disulfides stabilise this stretch: Cys31/Cys226, Cys73/Cys83, Cys88/Cys94, Cys142/Cys214, Cys147/Cys197, Cys155/Cys165, Cys169/Cys178, and Cys179/Cys184. N-linked (GlcNAc...) asparagine glycosylation occurs at Asn233.

It belongs to the thaumatin family.

This is Osmotin-like protein (OLPA) from Nicotiana tabacum (Common tobacco).